Reading from the N-terminus, the 138-residue chain is Basic phospholipase A2 Sct-N6 (138 aa).

The N-terminal stretch at 1–16 is a signal peptide; sequence MRTFWIVAVLLVGVEG. Disulfide bonds link Cys42–Cys131, Cys44–Cys60, Cys59–Cys111, Cys65–Cys138, Cys66–Cys104, Cys73–Cys97, and Cys91–Cys102. Ca(2+)-binding residues include Tyr43, Gly45, and Gly47. Residue His63 is part of the active site. Position 64 (Asp64) interacts with Ca(2+). The active site involves Asp105.

The protein belongs to the phospholipase A2 family. Group II subfamily. D49 sub-subfamily. Requires Ca(2+) as cofactor. Expressed by the venom gland.

Its subcellular location is the secreted. The catalysed reaction is a 1,2-diacyl-sn-glycero-3-phosphocholine + H2O = a 1-acyl-sn-glycero-3-phosphocholine + a fatty acid + H(+). Functionally, snake venom phospholipase A2 (PLA2) that displays edema-inducing activities, as well as presynaptic neurotoxicity and low myotoxicity. PLA2 catalyzes the calcium-dependent hydrolysis of the 2-acyl groups in 3-sn-phosphoglycerides. In Sistrurus tergeminus (Western massasauga), this protein is Basic phospholipase A2 Sct-N6.